We begin with the raw amino-acid sequence, 293 residues long: Probable tRNA-splicing endonuclease subunit Sen2 (293 aa).

Residues Tyr-157, His-165, and Lys-204 contribute to the active site. The helical transmembrane segment at 267–287 (VVFNHWGVILGFTVLSGLLVY) threads the bilayer.

This sequence belongs to the tRNA-intron endonuclease family. In terms of assembly, tRNA splicing endonuclease is a heterotetramer composed of SEN2, SEN15, SEN34/LENG5 and SEN54.

It localises to the nucleus. Its subcellular location is the membrane. The enzyme catalyses pretRNA = a 3'-half-tRNA molecule with a 5'-OH end + a 5'-half-tRNA molecule with a 2',3'-cyclic phosphate end + an intron with a 2',3'-cyclic phosphate and a 5'-hydroxyl terminus.. Its function is as follows. Constitutes one of the two catalytic subunit of the tRNA-splicing endonuclease complex, a complex responsible for identification and cleavage of the splice sites in pre-tRNA. It cleaves pre-tRNA at the 5'- and 3'-splice sites to release the intron. The products are an intron and two tRNA half-molecules bearing 2',3'-cyclic phosphate and 5'-OH termini. There are no conserved sequences at the splice sites, but the intron is invariably located at the same site in the gene, placing the splice sites an invariant distance from the constant structural features of the tRNA body. Probably carries the active site for 5'-splice site cleavage. The sequence is that of Probable tRNA-splicing endonuclease subunit Sen2 from Oryza sativa subsp. japonica (Rice).